A 103-amino-acid polypeptide reads, in one-letter code: Stefin-2 (103 aa).

Residues 52-56 carry the Secondary area of contact motif; sequence QVVQG.

It belongs to the cystatin family.

The protein localises to the cytoplasm. This is an intracellular thiol proteinase inhibitor. This Mus musculus (Mouse) protein is Stefin-2 (Stfa2).